A 200-amino-acid polypeptide reads, in one-letter code: Coiled-coil domain-containing protein 85B (200 aa).

Positions 57 to 84 form a coiled coil; it reads LQGHLLEIRELKVINQRLQEENQELRDL. Residues 178–188 are compositionally biased toward low complexity; it reads DGSSSTGSVGS. Residues 178-200 form a disordered region; that stretch reads DGSSSTGSVGSPDQLHLVCSPDD.

This sequence belongs to the CCDC85 family.

It localises to the nucleus. The protein localises to the cytoplasm. It is found in the cytoskeleton. The protein resides in the microtubule organizing center. Its subcellular location is the centrosome. It localises to the cell junction. The protein localises to the adherens junction. Functionally, functions as a transcriptional repressor. May inhibit the activity of CTNNB1 in a TP53-dependent manner and thus regulate cell growth. May function in adipocyte differentiation, negatively regulating mitotic clonal expansion. Plays a role in cell-cell adhesion and epithelium development through its interaction with proteins of the beta-catenin family. The polypeptide is Coiled-coil domain-containing protein 85B (ccdc85b) (Danio rerio (Zebrafish)).